Here is a 194-residue protein sequence, read N- to C-terminus: Large ribosomal subunit protein uL10 (194 aa).

Positions Glu-172–Pro-187 are enriched in low complexity. A disordered region spans residues Glu-172–Ser-194.

Belongs to the universal ribosomal protein uL10 family. In terms of assembly, part of the ribosomal stalk of the 50S ribosomal subunit. The N-terminus interacts with L11 and the large rRNA to form the base of the stalk. The C-terminus forms an elongated spine to which L12 dimers bind in a sequential fashion forming a multimeric L10(L12)X complex.

Functionally, forms part of the ribosomal stalk, playing a central role in the interaction of the ribosome with GTP-bound translation factors. The polypeptide is Large ribosomal subunit protein uL10 (Rhodococcus erythropolis (strain PR4 / NBRC 100887)).